We begin with the raw amino-acid sequence, 357 residues long: 3-isopropylmalate dehydrogenase (357 aa).

4 residues coordinate substrate: Arg-97, Arg-107, Arg-135, and Asp-224. Residues Asp-224, Asp-248, and Asp-252 each coordinate Mg(2+). 282-294 is a binding site for NAD(+); sequence GSAPDIAGQDKAN.

The protein belongs to the isocitrate and isopropylmalate dehydrogenases family. LeuB type 1 subfamily. As to quaternary structure, homodimer. The cofactor is Mg(2+). It depends on Mn(2+) as a cofactor.

It is found in the cytoplasm. It catalyses the reaction (2R,3S)-3-isopropylmalate + NAD(+) = 4-methyl-2-oxopentanoate + CO2 + NADH. Its pathway is amino-acid biosynthesis; L-leucine biosynthesis; L-leucine from 3-methyl-2-oxobutanoate: step 3/4. Catalyzes the oxidation of 3-carboxy-2-hydroxy-4-methylpentanoate (3-isopropylmalate) to 3-carboxy-4-methyl-2-oxopentanoate. The product decarboxylates to 4-methyl-2 oxopentanoate. This is 3-isopropylmalate dehydrogenase from Synechococcus sp. (strain CC9605).